The primary structure comprises 75 residues: uncharacterized protein (75 aa).

Residues 12-32 (LKVFILFTGFTALFYYAMIWV) traverse the membrane as a helical segment.

It localises to the cell membrane. This is an uncharacterized protein from Bacillus subtilis (strain 168).